The chain runs to 163 residues: I-Kappa-B like protein N3 (163 aa).

ANK repeat units lie at residues 62–95 and 100–130; these read LGDTCIHVAALANRGKQAIQLIEKLVEYGANLNT and NGDTVLDIAVKNKDHELTVWLWKQPSINLQT.

Belongs to the polydnaviridae I-Kappa-B like protein family.

Its function is as follows. Suppresses the host immune response through NF-kappa-B inactivation. Possesses ankyrin repeat domains required for NF-kappa-B binding but lacks the regulatory regions required for dissociation from NF-kappa-B and degradation. Therefore, prevents host NF-kappa-B release and subsequent activation. In Microplitis demolitor (Parasitoid wasp), this protein is I-Kappa-B like protein N3 (N6).